The sequence spans 474 residues: NADH-ubiquinone oxidoreductase chain 4 (474 aa).

13 consecutive transmembrane segments (helical) span residues 34–54 (SFFL…DLMF), 86–106 (LYGL…ISTV), 115–135 (LKFY…IKCS), 137–157 (LIAF…VVFF), 167–187 (AVIY…LACL), 211–231 (AMTI…IWPL), 242–262 (ASTG…LFGF), 276–295 (TFFL…NMWS), 302–322 (LVAY…LKGD), 325–345 (LIAY…LMFF), 373–393 (ALAI…LKFV), 405–425 (VSWP…LIGF), and 454–474 (YIIF…FLMI).

Belongs to the complex I subunit 4 family.

It localises to the mitochondrion membrane. The catalysed reaction is a ubiquinone + NADH + 5 H(+)(in) = a ubiquinol + NAD(+) + 4 H(+)(out). In terms of biological role, core subunit of the mitochondrial membrane respiratory chain NADH dehydrogenase (Complex I) that is believed to belong to the minimal assembly required for catalysis. Complex I functions in the transfer of electrons from NADH to the respiratory chain. The immediate electron acceptor for the enzyme is believed to be ubiquinone. The chain is NADH-ubiquinone oxidoreductase chain 4 (ND4) from Paramecium tetraurelia.